Reading from the N-terminus, the 406-residue chain is Betaine--homocysteine S-methyltransferase 1 (406 aa).

Positions 11–314 constitute a Hcy-binding domain; that stretch reads KGILERLNAG…YHIRAIAEEL (304 aa). An N6-succinyllysine mark is found at Lys40, Lys93, and Lys98. A Zn(2+)-binding site is contributed by Cys217. N6-succinyllysine is present on residues Lys232 and Lys241. Residues Cys299 and Cys300 each contribute to the Zn(2+) site. Ser330 bears the Phosphoserine mark. An N6-succinyllysine mark is found at Lys340 and Lys377.

Homotetramer. It depends on Zn(2+) as a cofactor.

It is found in the cytoplasm. The protein resides in the cytosol. It localises to the nucleus. The catalysed reaction is L-homocysteine + glycine betaine = N,N-dimethylglycine + L-methionine. The protein operates within amine and polyamine degradation; betaine degradation; sarcosine from betaine: step 1/2. It functions in the pathway amino-acid biosynthesis; L-methionine biosynthesis via de novo pathway; L-methionine from L-homocysteine (BhmT route): step 1/1. Its function is as follows. Involved in the regulation of homocysteine metabolism. Converts betaine and homocysteine to dimethylglycine and methionine, respectively. This reaction is also required for the irreversible oxidation of choline. This Pongo abelii (Sumatran orangutan) protein is Betaine--homocysteine S-methyltransferase 1 (BHMT).